Consider the following 440-residue polypeptide: Exosome complex component RRP45 (440 aa).

Residue Ser-65 is modified to Phosphoserine. Lys-297 carries the N6-acetyllysine; alternate modification. Lys-297 is covalently cross-linked (Glycyl lysine isopeptide (Lys-Gly) (interchain with G-Cter in SUMO1); alternate). Lys-297 participates in a covalent cross-link: Glycyl lysine isopeptide (Lys-Gly) (interchain with G-Cter in SUMO2); alternate. Residues Ser-306 and Ser-346 each carry the phosphoserine modification. Residues 341-362 are disordered; sequence EGIENSWGHLEDSEKEDEDEGG. Positions 353–362 are enriched in acidic residues; it reads SEKEDEDEGG. Residues Ser-393 and Ser-395 each carry the phosphoserine modification. The interval 404-440 is disordered; it reads EPDKNPKKIRTQTISATQVKAPSKKPVKKRKKKRAAN. The segment covering 425-440 has biased composition (basic residues); sequence PSKKPVKKRKKKRAAN.

It belongs to the RNase PH family. Component of the RNA exosome core complex (Exo-9), composed of EXOSC1, EXOSC2, EXOSC3, EXOSC4, EXOSC5, EXOSC6, EXOSC7, EXOSC8 and EXOSC9; within the complex interacts with EXOSC3, EXOSC4, EXOSC5 and DIS3. The catalytically inactive RNA exosome core complex (Exo-9) associates with the catalytic subunit EXOSC10/RRP6. Exo-9 may associate with DIS3 to form the nucleolar exosome complex, or DIS3L to form the cytoplasmic exosome complex. Exo-9 is formed by a hexameric base ring consisting of the heterodimers EXOSC4-EXOSC9, EXOSC5-EXOSC8 and EXOSC6-EXOSC7, and a cap ring consisting of EXOSC1, EXOSC2 and EXOSC3. The RNA exosome complex associates with cofactors C1D/RRP47, MPHOSPH6/MPP6 and MTREX/MTR4. Interacts (via C-terminus region) with SETX (via N-terminus domain); the interaction enhances SETX sumoylation. Interacts with DIS3; the interaction is direct.

The protein localises to the cytoplasm. It is found in the nucleus. Its subcellular location is the nucleolus. The protein resides in the nucleoplasm. Functionally, non-catalytic component of the RNA exosome complex which has 3'-&gt;5' exoribonuclease activity and participates in a multitude of cellular RNA processing and degradation events. In the nucleus, the RNA exosome complex is involved in proper maturation of stable RNA species such as rRNA, snRNA and snoRNA, in the elimination of RNA processing by-products and non-coding 'pervasive' transcripts, such as antisense RNA species and promoter-upstream transcripts (PROMPTs), and of mRNAs with processing defects, thereby limiting or excluding their export to the cytoplasm. The RNA exosome may be involved in Ig class switch recombination (CSR) and/or Ig variable region somatic hypermutation (SHM) by targeting AICDA deamination activity to transcribed dsDNA substrates. In the cytoplasm, the RNA exosome complex is involved in general mRNA turnover and specifically degrades inherently unstable mRNAs containing AU-rich elements (AREs) within their 3' untranslated regions, and in RNA surveillance pathways, preventing translation of aberrant mRNAs. It seems to be involved in degradation of histone mRNA. The catalytic inactive RNA exosome core complex of 9 subunits (Exo-9) is proposed to play a pivotal role in the binding and presentation of RNA for ribonucleolysis, and to serve as a scaffold for the association with catalytic subunits and accessory proteins or complexes. EXOSC9 binds to ARE-containing RNAs. This chain is Exosome complex component RRP45 (EXOSC9), found in Bos taurus (Bovine).